Reading from the N-terminus, the 147-residue chain is Cytochrome c-type biogenesis protein CcmE 1 (147 aa).

The Cytoplasmic portion of the chain corresponds to 1–9 (MKSLKKQRR). Residues 10-30 (IQVIILATVALVLATGLIGYA) traverse the membrane as a helical; Signal-anchor for type II membrane protein segment. Residues 31-147 (MRDGINFFRA…EQGVYQAPES (117 aa)) lie on the Periplasmic side of the membrane. 2 residues coordinate heme: histidine 123 and tyrosine 127.

This sequence belongs to the CcmE/CycJ family.

The protein resides in the cell inner membrane. Functionally, heme chaperone required for the biogenesis of c-type cytochromes. Transiently binds heme delivered by CcmC and transfers the heme to apo-cytochromes in a process facilitated by CcmF and CcmH. The protein is Cytochrome c-type biogenesis protein CcmE 1 of Ruegeria pomeroyi (strain ATCC 700808 / DSM 15171 / DSS-3) (Silicibacter pomeroyi).